The chain runs to 512 residues: Glutamate--tRNA ligase (512 aa).

Positions Pro11–Gly21 match the 'HIGH' region motif. Positions Lys263–Arg267 match the 'KMSKS' region motif. An ATP-binding site is contributed by Lys266.

Belongs to the class-I aminoacyl-tRNA synthetase family. Glutamate--tRNA ligase type 1 subfamily. Monomer.

It localises to the cytoplasm. The enzyme catalyses tRNA(Glu) + L-glutamate + ATP = L-glutamyl-tRNA(Glu) + AMP + diphosphate. In terms of biological role, catalyzes the attachment of glutamate to tRNA(Glu) in a two-step reaction: glutamate is first activated by ATP to form Glu-AMP and then transferred to the acceptor end of tRNA(Glu). This Amoebophilus asiaticus (strain 5a2) protein is Glutamate--tRNA ligase.